A 138-amino-acid chain; its full sequence is DNA-directed RNA polymerase II subunit 4 (138 aa).

N-acetylserine is present on Ser-2.

Belongs to the eukaryotic RPB4 RNA polymerase subunit family. In terms of assembly, component of the RNA polymerase II complex consisting of at least 12 subunits. Interacts with NRPB7.

The protein localises to the nucleus. Functionally, DNA-dependent RNA polymerase catalyzes the transcription of DNA into RNA using the four ribonucleoside triphosphates as substrates. Second largest component of RNA polymerase II which synthesizes mRNA precursors and many functional non-coding RNAs. Proposed to contribute to the polymerase catalytic activity and forms the polymerase active center together with the largest subunit. Pol II is the central component of the basal RNA polymerase II transcription machinery. It is composed of mobile elements that move relative to each other. The protein is DNA-directed RNA polymerase II subunit 4 (NRPB4) of Arabidopsis thaliana (Mouse-ear cress).